The primary structure comprises 120 residues: Prophage bactoprenol-linked glucose translocase homolog (120 aa).

The Cytoplasmic portion of the chain corresponds to 1-9; sequence MLKLFAKYT. Residues 10–30 traverse the membrane as a helical segment; the sequence is SIGVLNTLIHWVVFGVCIYVA. The Periplasmic portion of the chain corresponds to 31–33; it reads HTN. A helical transmembrane segment spans residues 34–54; that stretch reads QALANFAGFVVAVSFSFFANA. Over 55 to 64 the chain is Cytoplasmic; it reads KFTFKASTTT. Residues 65–85 traverse the membrane as a helical segment; it reads MRYMLYVGFMGTLSATVGWAA. The Periplasmic segment spans residues 86-88; that stretch reads DRC. The chain crosses the membrane as a helical span at residues 89–109; sequence ALPPMITLVTFSAISLVCGFV. The Cytoplasmic segment spans residues 110–120; it reads YSKFIVFRDAK.

This sequence belongs to the GtrA family.

It is found in the cell inner membrane. Functionally, involved in O antigen modification. Involved in the translocation of bactoprenol-linked glucose across the cytoplasmic membrane. This is Prophage bactoprenol-linked glucose translocase homolog (yfdG) from Escherichia coli (strain K12).